The sequence spans 368 residues: 4-hydroxy-3-methylbut-2-en-1-yl diphosphate synthase (flavodoxin) (368 aa).

Residues cysteine 271, cysteine 274, cysteine 306, and glutamate 313 each contribute to the [4Fe-4S] cluster site.

The protein belongs to the IspG family. The cofactor is [4Fe-4S] cluster.

It catalyses the reaction (2E)-4-hydroxy-3-methylbut-2-enyl diphosphate + oxidized [flavodoxin] + H2O + 2 H(+) = 2-C-methyl-D-erythritol 2,4-cyclic diphosphate + reduced [flavodoxin]. It functions in the pathway isoprenoid biosynthesis; isopentenyl diphosphate biosynthesis via DXP pathway; isopentenyl diphosphate from 1-deoxy-D-xylulose 5-phosphate: step 5/6. Functionally, converts 2C-methyl-D-erythritol 2,4-cyclodiphosphate (ME-2,4cPP) into 1-hydroxy-2-methyl-2-(E)-butenyl 4-diphosphate. The protein is 4-hydroxy-3-methylbut-2-en-1-yl diphosphate synthase (flavodoxin) of Mannheimia succiniciproducens (strain KCTC 0769BP / MBEL55E).